A 479-amino-acid chain; its full sequence is Acyltransferase easC (479 aa).

Histidine 161 functions as the Proton acceptor in the catalytic mechanism.

Belongs to the plant acyltransferase family. In terms of assembly, monomer.

It functions in the pathway antibiotic biosynthesis. Acyltransferase; part of the gene cluster that mediates the biosynthesis of emericellamides, secondary metabolites acting as antibiotics. The biosynthesis of emericellamides initiates from the highly reducing polyketide synthase easB which catalyzes the formation of the linear polyketide chain. EasB produces several polyketides that can be further processed by the downstream enzymes. The polyketides are released from easB as linear polyketide carboxylic acids, which are converted to CoA thioesters by the acyl-CoA ligase easD. The substrates are then loaded onto the acyltransferase easC, which shuttles them to the first thiolation (T) domain of the nonribosomal peptide synthetase easA. EasA then performs condensation of the polyketides with one glycine, two alanine, one valine and one leucine residues. A last step of cyclization leads to the production of emericellamides. The chain is Acyltransferase easC from Emericella nidulans (strain FGSC A4 / ATCC 38163 / CBS 112.46 / NRRL 194 / M139) (Aspergillus nidulans).